We begin with the raw amino-acid sequence, 461 residues long: Bifunctional enzyme LpxC/FabZ (461 aa).

The UDP-3-O-acyl-N-acetylglucosamine deacetylase stretch occupies residues 1-302; it reads MLKQKTLKDS…FARQMRKEIR (302 aa). The Zn(2+) site is built by His-78, His-260, and Asp-264. The active-site Proton donor is His-287. The interval 303–461 is 3-hydroxyacyl-[acyl-carrier-protein] dehydratase; the sequence is LHEIQAPTYD…EFMAQIVKNK (159 aa). The active site involves His-364.

It in the N-terminal section; belongs to the LpxC family. In the C-terminal section; belongs to the thioester dehydratase family. Zn(2+) is required as a cofactor.

Its subcellular location is the cytoplasm. It catalyses the reaction a UDP-3-O-[(3R)-3-hydroxyacyl]-N-acetyl-alpha-D-glucosamine + H2O = a UDP-3-O-[(3R)-3-hydroxyacyl]-alpha-D-glucosamine + acetate. The catalysed reaction is a (3R)-hydroxyacyl-[ACP] = a (2E)-enoyl-[ACP] + H2O. Its pathway is glycolipid biosynthesis; lipid IV(A) biosynthesis; lipid IV(A) from (3R)-3-hydroxytetradecanoyl-[acyl-carrier-protein] and UDP-N-acetyl-alpha-D-glucosamine: step 2/6. Functionally, catalyzes the hydrolysis of UDP-3-O-myristoyl-N-acetylglucosamine to form UDP-3-O-myristoylglucosamine and acetate, the committed step in lipid A biosynthesis. In terms of biological role, involved in unsaturated fatty acids biosynthesis. Catalyzes the dehydration of short chain beta-hydroxyacyl-ACPs and long chain saturated and unsaturated beta-hydroxyacyl-ACPs. The polypeptide is Bifunctional enzyme LpxC/FabZ (lpxC/fabZ) (Bacteroides thetaiotaomicron (strain ATCC 29148 / DSM 2079 / JCM 5827 / CCUG 10774 / NCTC 10582 / VPI-5482 / E50)).